The following is a 459-amino-acid chain: Ribulose bisphosphate carboxylase (459 aa).

A substrate-binding site is contributed by N111. Catalysis depends on K166, which acts as the Proton acceptor. Substrate is bound at residue K168. Positions 191, 193, and 194 each coordinate Mg(2+). Position 191 is an N6-carboxylysine (K191). H287 functions as the Proton acceptor in the catalytic mechanism. Substrate is bound by residues R288, H321, and S368.

Belongs to the RuBisCO large chain family. Type II subfamily. As to quaternary structure, homodimer. Requires Mg(2+) as cofactor.

The catalysed reaction is 2 (2R)-3-phosphoglycerate + 2 H(+) = D-ribulose 1,5-bisphosphate + CO2 + H2O. It carries out the reaction D-ribulose 1,5-bisphosphate + O2 = 2-phosphoglycolate + (2R)-3-phosphoglycerate + 2 H(+). RuBisCO catalyzes two reactions: the carboxylation of D-ribulose 1,5-bisphosphate, the primary event in carbon dioxide fixation, as well as the oxidative fragmentation of the pentose substrate. Both reactions occur simultaneously and in competition at the same active site. This chain is Ribulose bisphosphate carboxylase, found in Dechloromonas aromatica (strain RCB).